Consider the following 1452-residue polypeptide: Pleiotropic drug resistance protein 1 (1452 aa).

The ABC transporter 1 domain maps to leucine 152–glutamate 425. Glycine 185–threonine 192 serves as a coordination point for ATP. In terms of domain architecture, ABC transmembrane type-2 1 spans leucine 504–phenylalanine 716. 7 helical membrane-spanning segments follow: residues phenylalanine 521 to phenylalanine 541, glycine 554 to serine 574, isoleucine 609 to phenylalanine 629, leucine 640 to leucine 660, isoleucine 664 to phenylalanine 684, tryptophan 694 to asparagine 714, and isoleucine 753 to leucine 773. The tract at residues leucine 808–serine 830 is disordered. Residues serine 812 to arginine 821 show a composition bias toward basic and acidic residues. In terms of domain architecture, ABC transporter 2 spans isoleucine 855–aspartate 1107. Glycine 900–threonine 907 lines the ATP pocket. An ABC transmembrane type-2 2 domain is found at threonine 1180–phenylalanine 1394. 7 helical membrane passes run tyrosine 1199–tryptophan 1219, tyrosine 1239–isoleucine 1259, leucine 1287–phenylalanine 1307, phenylalanine 1314–methionine 1334, isoleucine 1344–valine 1364, tryptophan 1375–glycine 1395, and phenylalanine 1421–alanine 1441.

It belongs to the ABC transporter superfamily. ABCG family. PDR (TC 3.A.1.205) subfamily. In terms of tissue distribution, expressed in root hypodermal passage cells. Expressed in stem tissues, particularly the vasculature and nodes adjacent to leaf axils.

The protein resides in the cell membrane. Cellular strigolactone (SL) transporter required for the exudation of SL from the root to the soil. The presence of SL in the vicinity of the roots is required for development of symbiotic interactions with arbuscular mycorrhizal fungi (AMF). Transports SL in the above ground tissues and is required for the control of shoot branching. SL regulates plant shoot architecture by inhibiting the outgrowth of axillary buds. Involved in the regulation of shootward and outward directional strigolactone transport in roots. Due to its polar localization in root cells, mediates directional shootward strigolactone transport, as well as localized outward directional transport for exudation to the soil. This is Pleiotropic drug resistance protein 1 from Petunia hybrida (Petunia).